Reading from the N-terminus, the 101-residue chain is Toxin Tpa8 (101 aa).

An N-terminal signal peptide occupies residues M1–V20. Residues K24–E98 form the LCN-type CS-alpha/beta domain. 4 cysteine pairs are disulfide-bonded: C44/C70, C56/C75, C60/C77, and C71/C97.

The protein belongs to the long (4 C-C) scorpion toxin superfamily. Sodium channel inhibitor family. Beta subfamily. In terms of tissue distribution, expressed by the venom gland.

Its subcellular location is the secreted. Functionally, excitatory insect beta-toxins induce a spastic paralysis. They bind voltage-independently at site-4 of sodium channels (Nav) and shift the voltage of activation toward more negative potentials thereby affecting sodium channel activation and promoting spontaneous and repetitive firing. The polypeptide is Toxin Tpa8 (Tityus pachyurus (Colombian scorpion)).